A 704-amino-acid polypeptide reads, in one-letter code: MTENGQFLDYKNVFQENRGAMHDGRLQLLKEKIVFKNNKTGKIDSIQQNDLHSALWRRVARDFELKFQMNSGQVFRFDGFKEMEFERLKDFVKNYYKIDLEHQELSGKGWNWGTTDFEGNEMMFQVGQKLSFEIPLNNVSQCTQNKDEVTMEFHQNDDSELSLMEMRFFIPPSQDEMIDKVKDFHDNVMAKADVLQVKGTAICVFQDLQCLTPRGRYDIRMYPKFIQLHGKTFDYKITYTSILRLFLLPHKDQRQIFFVVSLDPPLKQGMTRYHFLILLFYKEDDLAVELSLPDDEIEERFGGKLQKDMSGPMYEVVSRVMKHLVQRKITVPGSFKGLNGVQSITCTYKASSGFLFPLERGFMYVHKPPVHIRFDEIAYVNFARGTTKINKSFDFEIETRSKNNFVFSNIERDQYASLYDFVHNKQLKIKNIGKDGADFDLMVDSDEDADVHDPYMERMKQEAAEREKQVDDDDDDESEDDDFQPETNVAEVEEEYNSDVGSASSGASDEEEEDGEEEVEEKPKKRKKEKVMKERRQKETPGKVKRKKKDPNAPKRPQSAYFLWLNENRGRFKAENKGISVTELTKLAGKEWKKIDPDEKQKFERMYQKSKVKFDAAMKEYKSQGGGRTSSSPAKKMKMKSPKPSKASSSMVSPSKFKSKEFITESDSLSSSDSDAEVKSKNSPPADEESASESEAASEEEESD.

Basic and acidic residues predominate over residues 460–469 (KQEAAEREKQ). Disordered regions lie at residues 460 to 562 (KQEA…SAYF) and 618 to 704 (MKEY…EESD). Over residues 470-484 (VDDDDDDESEDDDFQ) the composition is skewed to acidic residues. Over residues 498 to 507 (SDVGSASSGA) the composition is skewed to low complexity. Residues 508 to 520 (SDEEEEDGEEEVE) are compositionally biased toward acidic residues. Residues 531–542 (VMKERRQKETPG) are compositionally biased toward basic and acidic residues. Positions 554-622 (PKRPQSAYFL…KFDAAMKEYK (69 aa)) form a DNA-binding region, HMG box. Low complexity predominate over residues 644–656 (PSKASSSMVSPSK). Positions 686 to 704 (ADEESASESEAASEEEESD) are enriched in acidic residues.

It belongs to the SSRP1 family. Component of the FACT complex, a stable heterodimer of SSRP1 and SUPT16H. May also be a component of a CK2-SPT16-SSRP1 complex, composed of SSRP1, SUPT16H, CSNK2A1, CSNK2A2 and CSNK2B.

Its subcellular location is the nucleus. It localises to the chromosome. It is found in the nucleolus. Functionally, component of the FACT complex, a general chromatin factor that acts to reorganize nucleosomes. The FACT complex is involved in multiple processes that require DNA as a template such as mRNA elongation, DNA replication and DNA repair. During transcription elongation the FACT complex acts as a histone chaperone that both destabilizes and restores nucleosomal structure. It facilitates the passage of RNA polymerase II and transcription by promoting the dissociation of one histone H2A-H2B dimer from the nucleosome, then subsequently promotes the reestablishment of the nucleosome following the passage of RNA polymerase II. Binds specifically to double-stranded DNA. This chain is FACT complex subunit SSRP1 (SSRP1), found in Ciona intestinalis (Transparent sea squirt).